The chain runs to 277 residues: Ribosomal RNA small subunit methyltransferase A (277 aa).

The S-adenosyl-L-methionine site is built by Asn-26, Leu-28, Gly-53, Glu-74, Asp-101, and Asn-123.

Belongs to the class I-like SAM-binding methyltransferase superfamily. rRNA adenine N(6)-methyltransferase family. RsmA subfamily.

It localises to the cytoplasm. The enzyme catalyses adenosine(1518)/adenosine(1519) in 16S rRNA + 4 S-adenosyl-L-methionine = N(6)-dimethyladenosine(1518)/N(6)-dimethyladenosine(1519) in 16S rRNA + 4 S-adenosyl-L-homocysteine + 4 H(+). Its function is as follows. Specifically dimethylates two adjacent adenosines (A1518 and A1519) in the loop of a conserved hairpin near the 3'-end of 16S rRNA in the 30S particle. May play a critical role in biogenesis of 30S subunits. In Opitutus terrae (strain DSM 11246 / JCM 15787 / PB90-1), this protein is Ribosomal RNA small subunit methyltransferase A.